The chain runs to 277 residues: Putative ankyrin repeat protein L81 (277 aa).

2 ANK repeats span residues 150-179 (FGQTPMWIATTRCNYRNYVFLKKHGSDLHQ) and 183-215 (QGRSLLHATANAVNSECLDIFKDLIANGVDLYQ).

The sequence is that of Putative ankyrin repeat protein L81 from Acanthamoeba polyphaga (Amoeba).